Reading from the N-terminus, the 426-residue chain is Bifunctional protein GlmU (426 aa).

Positions 1–216 (MSEVDVVILA…WHDILGVNTQ (216 aa)) are pyrophosphorylase. UDP-N-acetyl-alpha-D-glucosamine-binding positions include 9–12 (LAAG), lysine 23, and glutamine 69. Residue aspartate 97 coordinates Mg(2+). UDP-N-acetyl-alpha-D-glucosamine contacts are provided by glycine 132, glutamate 148, asparagine 163, and asparagine 214. Asparagine 214 contacts Mg(2+). Residues 217–237 (QQLAAVSKIARKRINDQIMAN) form a linker region. Positions 238–426 (GVTMIDPLTT…AKHDQRDDQP (189 aa)) are N-acetyltransferase. 2 residues coordinate UDP-N-acetyl-alpha-D-glucosamine: arginine 286 and lysine 304. The active-site Proton acceptor is the histidine 316. Residues tyrosine 319 and asparagine 330 each contribute to the UDP-N-acetyl-alpha-D-glucosamine site. Acetyl-CoA is bound by residues alanine 333, 339–340 (NY), serine 358, alanine 376, and arginine 393.

In the N-terminal section; belongs to the N-acetylglucosamine-1-phosphate uridyltransferase family. The protein in the C-terminal section; belongs to the transferase hexapeptide repeat family. Homotrimer. Mg(2+) is required as a cofactor.

The protein localises to the cytoplasm. The enzyme catalyses alpha-D-glucosamine 1-phosphate + acetyl-CoA = N-acetyl-alpha-D-glucosamine 1-phosphate + CoA + H(+). The catalysed reaction is N-acetyl-alpha-D-glucosamine 1-phosphate + UTP + H(+) = UDP-N-acetyl-alpha-D-glucosamine + diphosphate. The protein operates within nucleotide-sugar biosynthesis; UDP-N-acetyl-alpha-D-glucosamine biosynthesis; N-acetyl-alpha-D-glucosamine 1-phosphate from alpha-D-glucosamine 6-phosphate (route II): step 2/2. Its pathway is nucleotide-sugar biosynthesis; UDP-N-acetyl-alpha-D-glucosamine biosynthesis; UDP-N-acetyl-alpha-D-glucosamine from N-acetyl-alpha-D-glucosamine 1-phosphate: step 1/1. It participates in bacterial outer membrane biogenesis; LPS lipid A biosynthesis. Functionally, catalyzes the last two sequential reactions in the de novo biosynthetic pathway for UDP-N-acetylglucosamine (UDP-GlcNAc). The C-terminal domain catalyzes the transfer of acetyl group from acetyl coenzyme A to glucosamine-1-phosphate (GlcN-1-P) to produce N-acetylglucosamine-1-phosphate (GlcNAc-1-P), which is converted into UDP-GlcNAc by the transfer of uridine 5-monophosphate (from uridine 5-triphosphate), a reaction catalyzed by the N-terminal domain. This chain is Bifunctional protein GlmU, found in Oenococcus oeni (strain ATCC BAA-331 / PSU-1).